The following is a 572-amino-acid chain: Probable lysosomal cobalamin transporter (572 aa).

9 helical membrane-spanning segments follow: residues 8–28, 40–60, 95–115, 145–165, 188–208, 314–334, 374–394, 421–441, and 499–519; these read VIWF…SVFI, FVTF…MLLP, IIYY…IPFA, TLTF…APMM, AFTF…AFYT, GGFC…MTVV, IIFA…VVAV, AVLT…LVPG, and VALN…LFLA. Positions 522–544 are disordered; sequence GRRRGRGRESVSKHQKKRQSYMR.

This sequence belongs to the LIMR family. LMBRD1 subfamily.

Its subcellular location is the lysosome membrane. Functionally, probable lysosomal cobalamin transporter. Required to export cobalamin from lysosomes allowing its conversion to cofactors. The chain is Probable lysosomal cobalamin transporter from Aspergillus fumigatus (strain ATCC MYA-4609 / CBS 101355 / FGSC A1100 / Af293) (Neosartorya fumigata).